Here is a 198-residue protein sequence, read N- to C-terminus: Putative Do-like 15 protein (198 aa).

The serine protease stretch occupies residues Lys-48–Lys-198. Residues His-86 and Ser-175 each act as charge relay system in the active site.

Belongs to the peptidase S1B family.

This Arabidopsis thaliana (Mouse-ear cress) protein is Putative Do-like 15 protein (DEGP15).